We begin with the raw amino-acid sequence, 180 residues long: ATP-dependent protease subunit HslV (180 aa).

T5 is a catalytic residue. Residues G165, C168, and T171 each contribute to the Na(+) site.

The protein belongs to the peptidase T1B family. HslV subfamily. In terms of assembly, a double ring-shaped homohexamer of HslV is capped on each side by a ring-shaped HslU homohexamer. The assembly of the HslU/HslV complex is dependent on binding of ATP.

It is found in the cytoplasm. It carries out the reaction ATP-dependent cleavage of peptide bonds with broad specificity.. Its activity is regulated as follows. Allosterically activated by HslU binding. Its function is as follows. Protease subunit of a proteasome-like degradation complex believed to be a general protein degrading machinery. The chain is ATP-dependent protease subunit HslV from Helicobacter pylori (strain G27).